The primary structure comprises 770 residues: Integrin beta-2 (770 aa).

Residues 1-22 (MLPQRPQLLLLAGLLSLQSVLS) form the signal peptide. A Pyrrolidone carboxylic acid modification is found at Q23. At 23-701 (QECTKYKVST…DMLECVKGPN (679 aa)) the chain is on the extracellular side. A PSI domain is found at 24-74 (ECTKYKVSTCRDCIESGPSCAWCQKLNFTGQGEPDSTRCDTRAQLLSKGCP). 28 disulfide bridges follow: C25–C43, C33–C447, C36–C62, C46–C73, C191–C198, C246–C286, C386–C400, C420–C445, C449–C467, C459–C470, C472–C481, C483–C514, C497–C512, C506–C517, C519–C534, C536–C559, C541–C557, C549–C562, C564–C573, C575–C598, C582–C596, C590–C601, C603–C612, C615–C618, C622–C663, C628–C647, C631–C643, and C671–C696. N50 and N116 each carry an N-linked (GlcNAc...) asparagine glycan. The 240-residue stretch at 124–363 (GYPIDLYYLM…ELIKSAYNKL (240 aa)) folds into the VWFA domain. Mg(2+) is bound by residues S136 and S138. Residues S138, D141, D142, and D173 each contribute to the Ca(2+) site. 4 residues coordinate Ca(2+): N229, D231, P233, and E234. E234 lines the Mg(2+) pocket. A glycan (N-linked (GlcNAc...) asparagine) is linked at N254. 2 residues coordinate Ca(2+): D264 and E347. The short motif at 397–399 (RGD) is the Cell attachment site element. I-EGF domains follow at residues 449–482 (CREASRDRGVCGGRGSMECGVCRCDAGYIGKNCE), 483–535 (CQTH…QFCE), 536–574 (CDNVNCERYDGQVCGGDKRGLCFCGACRCNDQYEGSACQ), and 575–613 (CLKSTQGCLNLNGVECSGRGRCRCNVCQCDPGYQPPLCI). A glycan (N-linked (GlcNAc...) asparagine) is linked at N501. Residue N642 is glycosylated (N-linked (GlcNAc...) asparagine). Residues 702–724 (IAAIVGGTVGGVVLVGILLLAIW) traverse the membrane as a helical segment. At 725–770 (KALTHLSDLREYHRFEKEKLKSQWNNDNPLFKSATTTVMNPKFAES) the chain is on the cytoplasmic side. 2 positions are modified to phosphoserine: S746 and S757. Phosphothreonine occurs at positions 759 and 761.

It belongs to the integrin beta chain family. In terms of assembly, heterodimer of an alpha and a beta subunit. The ITGB2 beta subunit associates with the ITGAL, ITGAM, ITGAX or ITGAD alpha subunits. Found in a complex with CD177 and ITGAM/CD11b. Interacts with FGR. Interacts with COPS5 and RANBP9. Interacts with FLNA (via filamin repeats 4, 9, 12, 17, 19, 21, and 23). Interacts with THBD. In terms of processing, both Ser-746 and Ser-757 become phosphorylated when T-cells are exposed to phorbol esters. Phosphorylation on Thr-759 (but not on Ser-757) allows interaction with 14-3-3 proteins.

It localises to the cell membrane. The protein resides in the membrane raft. Its function is as follows. Integrin ITGAL/ITGB2 is a receptor for ICAM1, ICAM2, ICAM3 and ICAM4. Integrin ITGAL/ITGB2 is also a receptor for the secreted form of ubiquitin-like protein ISG15; the interaction is mediated by ITGAL. Integrins ITGAM/ITGB2 and ITGAX/ITGB2 are receptors for the iC3b fragment of the third complement component and for fibrinogen. Integrin ITGAX/ITGB2 recognizes the sequence G-P-R in fibrinogen alpha-chain. Integrin ITGAM/ITGB2 recognizes P1 and P2 peptides of fibrinogen gamma chain. Integrin ITGAM/ITGB2 is also a receptor for factor X. Integrin ITGAD/ITGB2 is a receptor for ICAM3 and VCAM1. Contributes to natural killer cell cytotoxicity. Involved in leukocyte adhesion and transmigration of leukocytes including T-cells and neutrophils. Triggers neutrophil transmigration during lung injury through PTK2B/PYK2-mediated activation. Integrin ITGAL/ITGB2 in association with ICAM3, contributes to apoptotic neutrophil phagocytosis by macrophages. In association with alpha subunit ITGAM/CD11b, required for CD177-PRTN3-mediated activation of TNF primed neutrophils. In Ovis canadensis (Bighorn sheep), this protein is Integrin beta-2 (ITGB2).